The following is a 344-amino-acid chain: MITQRQNDILNLIVELFTQTHEPVGSKALQRTIDSSSATIRNDMAKLEKLGLLEKAHTSSGRMPSPAGFKYFVEHSLRLDSIDEQDIYHVIKTFDFEAFKLEDMLQKASHILAEMTGYTSVILDVEPARQRLTGFDVVQLSNHDALAVMTLDESKPVTVQFAIPRNFLTRDLIAFKAIVEERLLDSSVIDIHYKLRTEIPQIVQKYFVTTDNVLQLFDYVFSELFLETVFVAGKVNSLTYSDLSTYQFLDNEQQVAISLRQSLKEGEMASVQVADSQEAALADVSVLTHKFLIPYRGFGLLSLIGPIDMDYRRSVSLVNIIGKVLAAKLGDYYRYLNSNHYEVH.

Belongs to the HrcA family.

Functionally, negative regulator of class I heat shock genes (grpE-dnaK-dnaJ and groELS operons). Prevents heat-shock induction of these operons. The protein is Heat-inducible transcription repressor HrcA of Streptococcus pyogenes serotype M6 (strain ATCC BAA-946 / MGAS10394).